A 97-amino-acid polypeptide reads, in one-letter code: MPAANSMAMKRETLNLRIKPAERDLIDRAAKARGKNRTDFVLEAARAAAEEALIEQRIIMADPEAYQEFLVRLDQTPSPNAALRKTMQTPAPWEQEK.

It belongs to the TacA antitoxin family. In terms of assembly, homodimer. Forms a complex with cognate toxin TacT2.

Antitoxin component of a type II toxin-antitoxin (TA) system. Counteracts the toxic effect of cognate toxin TacT2. Its function is as follows. The TacA2-TacT2 complex both represses and derepresses expression of its own operon. This is Antitoxin TacA2 from Salmonella enteritidis.